The chain runs to 314 residues: Methionyl-tRNA formyltransferase (314 aa).

110 to 113 lines the (6S)-5,6,7,8-tetrahydrofolate pocket; it reads SLLP.

It belongs to the Fmt family.

The catalysed reaction is L-methionyl-tRNA(fMet) + (6R)-10-formyltetrahydrofolate = N-formyl-L-methionyl-tRNA(fMet) + (6S)-5,6,7,8-tetrahydrofolate + H(+). Attaches a formyl group to the free amino group of methionyl-tRNA(fMet). The formyl group appears to play a dual role in the initiator identity of N-formylmethionyl-tRNA by promoting its recognition by IF2 and preventing the misappropriation of this tRNA by the elongation apparatus. This is Methionyl-tRNA formyltransferase from Bacillus anthracis (strain A0248).